A 316-amino-acid polypeptide reads, in one-letter code: MALEHLRIASRRSQLAMVQTNWVKAELEKAHPGLAISVEAMATQGDKILDVALAKIGDKGLFTKELEAQMLVGRAEIAVHSLKDLPTNLPEGLMLGCITEREDPADALVVNSKNAEYTLETLPEGSIVGTSSLRRLAQLRYHYPHLQFKDVRGNVITRLEKLDSGNYDCLILAAAGLSRLGFGDRIHQSIPGNISLHAVGQGALGIECVCDRPEVMELIQVLNHAPTSARCLAERAFLRVLEGGCQVPIGVNTQIEGDTIQLTGMVASLDGKRLIRDEQAGPLADPEAVGRDLAHKLKDQGAGEILQEIFEMERGQ.

Position 245 is an S-(dipyrrolylmethanemethyl)cysteine (C245).

It belongs to the HMBS family. In terms of assembly, monomer. Requires dipyrromethane as cofactor.

It catalyses the reaction 4 porphobilinogen + H2O = hydroxymethylbilane + 4 NH4(+). Its pathway is porphyrin-containing compound metabolism; protoporphyrin-IX biosynthesis; coproporphyrinogen-III from 5-aminolevulinate: step 2/4. The protein operates within porphyrin-containing compound metabolism; chlorophyll biosynthesis. Its function is as follows. Tetrapolymerization of the monopyrrole PBG into the hydroxymethylbilane pre-uroporphyrinogen in several discrete steps. The protein is Porphobilinogen deaminase of Synechococcus sp. (strain CC9311).